An 819-amino-acid chain; its full sequence is Lon protease (819 aa).

Polar residues predominate over residues 1–14 (MNSTNNTDSQNLDP). A disordered region spans residues 1–41 (MNSTNNTDSQNLDPNASEVEKLLDESAEAEEKTDDHTPPSE). The segment covering 18–38 (EVEKLLDESAEAEEKTDDHTP) has biased composition (basic and acidic residues). The 198-residue stretch at 42 to 239 (LFILPLNKRP…KALVLLKKEL (198 aa)) folds into the Lon N-terminal domain. 392-399 (GPPGVGKT) provides a ligand contact to ATP. In terms of domain architecture, Lon proteolytic spans 634–818 (KTPVGVATGL…DDVFKIAFPG (185 aa)). Catalysis depends on residues Ser-724 and Lys-767.

It belongs to the peptidase S16 family. As to quaternary structure, homohexamer. Organized in a ring with a central cavity.

It is found in the cytoplasm. The catalysed reaction is Hydrolysis of proteins in presence of ATP.. Functionally, ATP-dependent serine protease that mediates the selective degradation of mutant and abnormal proteins as well as certain short-lived regulatory proteins. Required for cellular homeostasis and for survival from DNA damage and developmental changes induced by stress. Degrades polypeptides processively to yield small peptide fragments that are 5 to 10 amino acids long. Binds to DNA in a double-stranded, site-specific manner. This is Lon protease from Chlamydia muridarum (strain MoPn / Nigg).